We begin with the raw amino-acid sequence, 295 residues long: Foldase protein PrsA (295 aa).

The first 19 residues, 1 to 19 (MKKVLIGFASIAMAFTLAA), serve as a signal peptide directing secretion. The N-palmitoyl cysteine moiety is linked to residue cysteine 20. A lipid anchor (S-diacylglycerol cysteine) is attached at cysteine 20. Positions 136–229 (EPKVTVAQIL…YGYQVIKMIN (94 aa)) constitute a PpiC domain.

Belongs to the PrsA family.

The protein resides in the cell membrane. The enzyme catalyses [protein]-peptidylproline (omega=180) = [protein]-peptidylproline (omega=0). Plays a major role in protein secretion by helping the post-translocational extracellular folding of several secreted proteins. This Pediococcus pentosaceus (strain ATCC 25745 / CCUG 21536 / LMG 10740 / 183-1w) protein is Foldase protein PrsA.